Consider the following 620-residue polypeptide: MSPEALSELISSIAHNLVAAGQAGALTDELIPPVDKLAVMRPKDRAHGDWASNIAMQLAKKAGMKPRDLAEPFAAALAEADGIAKVEVAGPGFINITLDSASAAAVVDTVLAAGAMTDTDKHLNKVNEYGRNAHLGGQTLNLEFVSANPTGPIHIGGTRWAAVGDAMARVLEANGAKVVREYYFNDHGEQINRFAKSLVAAWAEANNLGEAGYQTETPCDGYKGAYINEIAARVQAEAESDGVDLTALAHQDQGLNDDGEPLGEADTEVREEFRKRAVPMMFDEIQKSMKDFRVNFDVWFHENSLYADGKVDAAIEELKSRGDIFDKDGATWFESTKHGDDKDRVIIKSNGEFAYFAADIAYYWDKRHRAENPADVAIYMLGADHHGYIGRMMAMCAAFGDEPGKNMQILIGQLVNVMKDGKPVRMSKRAGNVVTIDDLVSVVGVDAARYSLARSDYNQNFDIDLALLASHTNDNPVYYVQYAHARSKNVDRNAAVAGISYEGADLALLDTEADGEVLAALAQFPSVLATAADDRQPHKVARYLEELAATYHKWYNVERVVPMALTDPETRGDDEARKALEIAKNPEPARAAARLKLNDAVQQVIANGLDLLGVTAPEKM.

Residues 147 to 157 (ANPTGPIHIGG) carry the 'HIGH' region motif.

The protein belongs to the class-I aminoacyl-tRNA synthetase family. In terms of assembly, monomer.

The protein resides in the cytoplasm. The enzyme catalyses tRNA(Arg) + L-arginine + ATP = L-arginyl-tRNA(Arg) + AMP + diphosphate. The sequence is that of Arginine--tRNA ligase from Bifidobacterium longum (strain DJO10A).